Consider the following 669-residue polypeptide: DNA ligase (669 aa).

Position 35-39 (35-39 (DFEYD)) interacts with NAD(+). The disordered stretch occupies residues 52 to 71 (YPEWDSPDSPTHRVGSDKTE). A compositionally biased stretch (basic and acidic residues) spans 61-71 (PTHRVGSDKTE). NAD(+) contacts are provided by residues 84–85 (SL) and Glu115. Lys117 serves as the catalytic N6-AMP-lysine intermediate. 4 residues coordinate NAD(+): Arg138, Glu175, Lys290, and Lys314. Positions 408, 411, 426, and 432 each coordinate Zn(2+). Positions 590–669 (PVSARLAGKT…EEEFLRLIEE (80 aa)) constitute a BRCT domain.

This sequence belongs to the NAD-dependent DNA ligase family. LigA subfamily. The cofactor is Mg(2+). Mn(2+) is required as a cofactor.

It catalyses the reaction NAD(+) + (deoxyribonucleotide)n-3'-hydroxyl + 5'-phospho-(deoxyribonucleotide)m = (deoxyribonucleotide)n+m + AMP + beta-nicotinamide D-nucleotide.. Functionally, DNA ligase that catalyzes the formation of phosphodiester linkages between 5'-phosphoryl and 3'-hydroxyl groups in double-stranded DNA using NAD as a coenzyme and as the energy source for the reaction. It is essential for DNA replication and repair of damaged DNA. This Porphyromonas gingivalis (strain ATCC 33277 / DSM 20709 / CIP 103683 / JCM 12257 / NCTC 11834 / 2561) protein is DNA ligase.